The sequence spans 485 residues: Putative E3 ubiquitin-protein ligase makorin-4 (485 aa).

Residues 1 to 32 show a composition bias toward low complexity; sequence MAEAAAPGTTVTTSGAGAAAAEAAETAEAVSP. The interval 1–63 is disordered; that stretch reads MAEAAAPGTT…GSDGSGGRGD (63 aa). Residues 45 to 63 are compositionally biased toward gly residues; the sequence is AGGGVGGSDGSDGSGGRGD. 3 C3H1-type zinc fingers span residues 90 to 117, 124 to 146, and 243 to 270; these read WTKQ…HDLS, VCKY…HSKP, and ETKK…HGDL. The makorin-type Cys-His stretch occupies residues 271 to 298; the sequence is CDMCGLQVLHPMDAAQRSQHIQACIEAH. The RING-type zinc-finger motif lies at 316–370; sequence CGICMEVVYEKANPNEHRFGILSNCNHTFCLKCIRKWRSAKEFESRIVKSCPQCR. The C3H1-type 4 zinc-finger motif lies at 399 to 428; that stretch reads AMSNKACKYFDEGRGSCPFGENCFYKHMYP.

The enzyme catalyses S-ubiquitinyl-[E2 ubiquitin-conjugating enzyme]-L-cysteine + [acceptor protein]-L-lysine = [E2 ubiquitin-conjugating enzyme]-L-cysteine + N(6)-ubiquitinyl-[acceptor protein]-L-lysine.. Its pathway is protein modification; protein ubiquitination. May act as a E3 ubiquitin ligase catalyzing the covalent attachment of ubiquitin moieties onto substrate proteins. This is Putative E3 ubiquitin-protein ligase makorin-4 (MKRN4P) from Homo sapiens (Human).